The following is a 431-amino-acid chain: Venom metalloproteinase 1 (431 aa).

A signal peptide spans 1–22 (MDLFILTRFILFLSFFMKSIHC). Residues asparagine 64, asparagine 113, asparagine 148, and asparagine 187 are each glycosylated (N-linked (GlcNAc...) asparagine). The Peptidase M12B domain occupies 228-428 (DLLMKTSRRL…TSAACLKDTY (201 aa)). Intrachain disulfides connect cysteine 340-cysteine 423 and cysteine 379-cysteine 407. Histidine 363 contacts Zn(2+). Glutamate 364 is an active-site residue. Zn(2+) is bound by residues histidine 367 and histidine 373. N-linked (GlcNAc...) asparagine glycosylation occurs at asparagine 414.

The protein in the C-terminal section; belongs to the venom metalloproteinase (M12B) family. Monomer. The cofactor is Zn(2+). As to expression, expressed by the venom gland.

It is found in the secreted. With respect to regulation, the gelatinase activity is inhibited by EDTA. In terms of biological role, the recombinant protein has gelatinase activity. In vivo, injection of this recombinant into fifth instar L.oleracea (host) larvae results in partial insect mortality associated with the molt to sixth instar, with surviving insects showing retarded development and growth. The protein is Venom metalloproteinase 1 of Eulophus pennicornis (Parasitoid wasp).